Consider the following 145-residue polypeptide: Histone H2B (145 aa).

Residues 1–52 are disordered; sequence MAPKAAAGKKPAEKKPVEEKKAEEVPAEKKPKAGKKLPKDAGRPDKKKKRAK. Residues Lys-9, Lys-35, and Lys-36 each carry the N6-acetyllysine modification. Basic and acidic residues predominate over residues 10-44; it reads KPAEKKPVEEKKAEEVPAEKKPKAGKKLPKDAGRP. Residue Lys-141 forms a Glycyl lysine isopeptide (Lys-Gly) (interchain with G-Cter in ubiquitin) linkage.

Belongs to the histone H2B family. In terms of assembly, the nucleosome is a histone octamer containing two molecules each of H2A, H2B, H3 and H4 assembled in one H3-H4 heterotetramer and two H2A-H2B heterodimers. The octamer wraps approximately 147 bp of DNA. In terms of processing, can be acetylated to form H2BK6ac, H2BK33ac and H2BK34ac. Post-translationally, monoubiquitinated to form H2BK143ub1; may give a specific tag for epigenetic transcriptional activation. As to expression, in anthers, floral buds, pollen, petals and fruits.

Its subcellular location is the nucleus. It localises to the chromosome. Its function is as follows. Core component of nucleosome. Nucleosomes wrap and compact DNA into chromatin, limiting DNA accessibility to the cellular machineries which require DNA as a template. Histones thereby play a central role in transcription regulation, DNA repair, DNA replication and chromosomal stability. DNA accessibility is regulated via a complex set of post-translational modifications of histones, also called histone code, and nucleosome remodeling. This Capsicum annuum (Capsicum pepper) protein is Histone H2B (HIS2B).